The following is a 242-amino-acid chain: Ubiquinone biosynthesis O-methyltransferase (242 aa).

The S-adenosyl-L-methionine site is built by Arg-44, Gly-64, Asp-85, and Met-129.

It belongs to the methyltransferase superfamily. UbiG/COQ3 family.

It carries out the reaction a 3-demethylubiquinol + S-adenosyl-L-methionine = a ubiquinol + S-adenosyl-L-homocysteine + H(+). The enzyme catalyses a 3-(all-trans-polyprenyl)benzene-1,2-diol + S-adenosyl-L-methionine = a 2-methoxy-6-(all-trans-polyprenyl)phenol + S-adenosyl-L-homocysteine + H(+). The protein operates within cofactor biosynthesis; ubiquinone biosynthesis. Its function is as follows. O-methyltransferase that catalyzes the 2 O-methylation steps in the ubiquinone biosynthetic pathway. The polypeptide is Ubiquinone biosynthesis O-methyltransferase (Salmonella choleraesuis (strain SC-B67)).